We begin with the raw amino-acid sequence, 444 residues long: RING finger and transmembrane domain-containing protein 2 (444 aa).

At 1–181 the chain is on the extracellular side; sequence MWLFTVNQVL…ILLAKLCFQH (181 aa). Disordered stretches follow at residues 13-41 and 92-149; these read MQRR…ASVD and PASR…PGTP. The span at 107-121 shows a compositional bias: basic residues; it reads YHHRQPHHHFHHGGH. Basic and acidic residues predominate over residues 131-140; the sequence is GGDHRGHSEE. A helical transmembrane segment spans residues 182-202; sequence KLGIAVCIGMASTFAYANSTL. Over 203–214 the chain is Cytoplasmic; sequence REQVSLKEKRSV. Residues 215–235 form a helical membrane-spanning segment; that stretch reads LVILWILAFLAGNTLYVLYTF. The Extracellular portion of the chain corresponds to 236 to 255; it reads SSQQLYNSLIFLKPNLETLD. Residues 256-276 traverse the membrane as a helical segment; that stretch reads FFDLLWIVGIADFVLKYITIA. Residues 277-329 lie on the Cytoplasmic side of the membrane; the sequence is LKCLIVALPKIILAVKSKGKFYLVIEELSQLFRSLVPIQLWYKYIMGDDSSNS. A helical membrane pass occupies residues 330 to 350; sequence YFLGGVLIVLYSLCKSFDICG. The Extracellular segment spans residues 351-444; sequence RVGGVRKALK…GATSAHFQVY (94 aa). The RING-type; degenerate zinc-finger motif lies at 384-422; the sequence is CAICQAEFREPLILLCQHVFCEECLCLWLDRERTCPLSR.

It is found in the membrane. In terms of biological role, E3 ubiquitin-protein ligase that negatively regulates IL3-dependent cellular responses through IL3RA ubiquitination and degradation by the proteasome, having an anti-inflammatory effect. In Pongo abelii (Sumatran orangutan), this protein is RING finger and transmembrane domain-containing protein 2 (RNFT2).